We begin with the raw amino-acid sequence, 460 residues long: Malonyl-coenzyme A:anthocyanin 3-O-glucoside-6''-O-malonyltransferase (460 aa).

Catalysis depends on proton acceptor residues His173 and Asp400.

It belongs to the plant acyltransferase family.

The enzyme catalyses an anthocyanidin 3-O-beta-D-glucoside + malonyl-CoA = an anthocyanidin 3-O-(6-O-malonyl-beta-D-glucoside) + CoA. Its activity is regulated as follows. Completely inhibited by 5 mM N-ethylmaleimide or 0.1 mM Cu(2+). Partially inhibited by 0.1 mM Fe(2+) or 0.1 mM Hg(2+). Its function is as follows. Catalyzes the transfer of the malonyl group from malonyl-CoA to pelargonidin 3-O-glucoside to produce pelargonidin 3-O-6''-O-malonylglucoside. Can also transfer the malonyl group from malonyl-CoA to cyanidin 3-O-glucoside, delphinidin 3-O-glucoside and quercetin 3-O-glucoside. The chain is Malonyl-coenzyme A:anthocyanin 3-O-glucoside-6''-O-malonyltransferase from Dahlia pinnata (Pinnate dahlia).